The chain runs to 348 residues: Mannonate dehydratase (348 aa).

The protein belongs to the mannonate dehydratase family. The cofactor is Fe(2+). It depends on Mn(2+) as a cofactor.

It catalyses the reaction D-mannonate = 2-dehydro-3-deoxy-D-gluconate + H2O. Its pathway is carbohydrate metabolism; pentose and glucuronate interconversion. Functionally, catalyzes the dehydration of D-mannonate. The protein is Mannonate dehydratase of Streptococcus uberis (strain ATCC BAA-854 / 0140J).